A 108-amino-acid chain; its full sequence is ATP synthase epsilon chain (108 aa).

Belongs to the ATPase epsilon chain family. In terms of assembly, F-type ATPases have 2 components, CF(1) - the catalytic core - and CF(0) - the membrane proton channel. CF(1) has five subunits: alpha(3), beta(3), gamma(1), delta(1), epsilon(1). CF(0) has three main subunits: a, b and c.

The protein resides in the cell inner membrane. Functionally, produces ATP from ADP in the presence of a proton gradient across the membrane. The sequence is that of ATP synthase epsilon chain from Thermotoga maritima (strain ATCC 43589 / DSM 3109 / JCM 10099 / NBRC 100826 / MSB8).